Reading from the N-terminus, the 854-residue chain is Protein mono-ADP-ribosyltransferase PARP8 (854 aa).

Disordered regions lie at residues 113 to 138 (NGEE…EFYY) and 291 to 310 (SYPP…EQDG). Residues 123-135 (VEEDSEGDNDSEE) are compositionally biased toward acidic residues. Residues C332, C367, C376, and C395 each carry the ADP-ribosylcysteine modification. The PARP catalytic domain occupies 617-844 (EMTQAPYLEI…QEGGIHKEIL (228 aa)). The interval 750-777 (QKVSAKDEPASSSKSSNTSQSQKKGQQS) is disordered. Positions 760–777 (SSSKSSNTSQSQKKGQQS) are enriched in low complexity.

The protein belongs to the ARTD/PARP family. In terms of processing, auto-mono-ADP-ribosylated.

It carries out the reaction L-cysteinyl-[protein] + NAD(+) = S-(ADP-D-ribosyl)-L-cysteinyl-[protein] + nicotinamide + H(+). Mono-ADP-ribosyltransferase that mediates mono-ADP-ribosylation of target proteins. This is Protein mono-ADP-ribosyltransferase PARP8 from Homo sapiens (Human).